Consider the following 161-residue polypeptide: UPF0262 protein SPOA0072 (161 aa).

Positions 1–21 are disordered; the sequence is MTMSRISHIELDDSNLPPPTP.

This sequence belongs to the UPF0262 family.

This chain is UPF0262 protein SPOA0072, found in Ruegeria pomeroyi (strain ATCC 700808 / DSM 15171 / DSS-3) (Silicibacter pomeroyi).